The primary structure comprises 349 residues: sn-glycerol-3-phosphate import ATP-binding protein UgpC (349 aa).

Residues 4–234 (ISLRDVRKSY…PATTFVAGFI (231 aa)) enclose the ABC transporter domain. 36–43 (GPSGCGKS) contributes to the ATP binding site.

Belongs to the ABC transporter superfamily. sn-glycerol-3-phosphate importer (TC 3.A.1.1.3) family. In terms of assembly, the complex is composed of two ATP-binding proteins (UgpC), two transmembrane proteins (UgpA and UgpE) and a solute-binding protein (UgpB).

The protein resides in the cell inner membrane. The enzyme catalyses sn-glycerol 3-phosphate(out) + ATP + H2O = sn-glycerol 3-phosphate(in) + ADP + phosphate + H(+). Its function is as follows. Part of the ABC transporter complex UgpBAEC involved in sn-glycerol-3-phosphate (G3P) import. Responsible for energy coupling to the transport system. This is sn-glycerol-3-phosphate import ATP-binding protein UgpC from Cereibacter sphaeroides (strain ATCC 17023 / DSM 158 / JCM 6121 / CCUG 31486 / LMG 2827 / NBRC 12203 / NCIMB 8253 / ATH 2.4.1.) (Rhodobacter sphaeroides).